Here is a 160-residue protein sequence, read N- to C-terminus: SsrA-binding protein (160 aa).

Belongs to the SmpB family.

Its subcellular location is the cytoplasm. Its function is as follows. Required for rescue of stalled ribosomes mediated by trans-translation. Binds to transfer-messenger RNA (tmRNA), required for stable association of tmRNA with ribosomes. tmRNA and SmpB together mimic tRNA shape, replacing the anticodon stem-loop with SmpB. tmRNA is encoded by the ssrA gene; the 2 termini fold to resemble tRNA(Ala) and it encodes a 'tag peptide', a short internal open reading frame. During trans-translation Ala-aminoacylated tmRNA acts like a tRNA, entering the A-site of stalled ribosomes, displacing the stalled mRNA. The ribosome then switches to translate the ORF on the tmRNA; the nascent peptide is terminated with the 'tag peptide' encoded by the tmRNA and targeted for degradation. The ribosome is freed to recommence translation, which seems to be the essential function of trans-translation. This chain is SsrA-binding protein, found in Citrobacter koseri (strain ATCC BAA-895 / CDC 4225-83 / SGSC4696).